We begin with the raw amino-acid sequence, 218 residues long: MKLILLGAPGAGKGTQAAFICQKYGIPQISTGDMLRAAVKAGTPLGQQAKAVMDAGQLVSDDLIINLVKERIAQADCANGFLFDGFPRTIPQADAMKAAGVKLDYVLEIDVPFDAIIERMSGRRSHPASGRTYHVKFNPPKVEGQDDVTGEPLVQREDDKEETVKKRLDVYSSQTRPLVDYYRAWAEKEAAAAPKYRAISGLGSVEDITQRALAALAE.

Residue 10–15 participates in ATP binding; the sequence is GAGKGT. Positions 30–59 are NMP; sequence STGDMLRAAVKAGTPLGQQAKAVMDAGQLV. AMP is bound by residues Thr31, Arg36, 57–59, 85–88, and Gln92; these read QLV and GFPR. Residues 122–159 are LID; it reads GRRSHPASGRTYHVKFNPPKVEGQDDVTGEPLVQREDD. Residues Arg123 and 132-133 each bind ATP; that span reads TY. The interval 127–151 is disordered; sequence PASGRTYHVKFNPPKVEGQDDVTGE. The AMP site is built by Arg156 and Arg167. Gly203 contributes to the ATP binding site.

The protein belongs to the adenylate kinase family. As to quaternary structure, monomer.

It localises to the cytoplasm. It carries out the reaction AMP + ATP = 2 ADP. Its pathway is purine metabolism; AMP biosynthesis via salvage pathway; AMP from ADP: step 1/1. Catalyzes the reversible transfer of the terminal phosphate group between ATP and AMP. Plays an important role in cellular energy homeostasis and in adenine nucleotide metabolism. The chain is Adenylate kinase from Delftia acidovorans (strain DSM 14801 / SPH-1).